Here is a 368-residue protein sequence, read N- to C-terminus: Cytochrome b-c1 complex subunit 2, mitochondrial (368 aa).

The transit peptide at 1–16 directs the protein to the mitochondrion; sequence MLSAARLQFAQGSVRR. Ser-141 and Ser-168 each carry phosphoserine.

This sequence belongs to the peptidase M16 family. UQCRC2/QCR2 subfamily. Component of the ubiquinol-cytochrome c oxidoreductase (cytochrome b-c1 complex, complex III, CIII), a multisubunit enzyme composed of 10 subunits. The complex is composed of 3 respiratory subunits cytochrome b (COB), cytochrome c1 (CYT1) and Rieske protein (RIP1), 2 core protein subunits COR1 and QCR2, and 5 low-molecular weight protein subunits QCR6, QCR7, QCR8, QCR9 and QCR10. The complex exists as an obligatory dimer and forms supercomplexes (SCs) in the inner mitochondrial membrane with a monomer or a dimer of cytochrome c oxidase (complex IV, CIV), resulting in 2 different assemblies (supercomplexes III(2)IV and III(2)IV(2)).

Its subcellular location is the mitochondrion inner membrane. Functionally, component of the ubiquinol-cytochrome c oxidoreductase, a multisubunit transmembrane complex that is part of the mitochondrial electron transport chain which drives oxidative phosphorylation. The respiratory chain contains 3 multisubunit complexes succinate dehydrogenase (complex II, CII), ubiquinol-cytochrome c oxidoreductase (cytochrome b-c1 complex, complex III, CIII) and cytochrome c oxidase (complex IV, CIV), that cooperate to transfer electrons derived from NADH and succinate to molecular oxygen, creating an electrochemical gradient over the inner membrane that drives transmembrane transport and the ATP synthase. The cytochrome b-c1 complex catalyzes electron transfer from ubiquinol to cytochrome c, linking this redox reaction to translocation of protons across the mitochondrial inner membrane, with protons being carried across the membrane as hydrogens on the quinol. In the process called Q cycle, 2 protons are consumed from the matrix, 4 protons are released into the intermembrane space and 2 electrons are passed to cytochrome c. The sequence is that of Cytochrome b-c1 complex subunit 2, mitochondrial (QCR2) from Saccharomyces cerevisiae (strain ATCC 204508 / S288c) (Baker's yeast).